We begin with the raw amino-acid sequence, 242 residues long: MIFSNNKKLKFKRVIIKLSGEALQGVHKFGIDIIELNRIAKEIKAIFDLGVQIGIVIGGGNIFRGKKLAKFGINKVISDYVGMLSTIMNGLLLCDSMDLVHLSSCLMSSICIDKICEQYSFKKALSLLRRNKVVVFSGGLGNPFFTTDSAACLRAIEMRADIVLKGTKVNGVYSSDPKKSSNSILYKNISYNEVLQKELKVMDLAAFALARDHKLPICIFNINKPNALYYIVTGQKEGTLIR.

An ATP-binding site is contributed by 17-20; the sequence is KLSG. Glycine 59 provides a ligand contact to UMP. Residues glycine 60 and arginine 64 each coordinate ATP. UMP is bound by residues aspartate 79 and 140 to 147; that span reads LGNPFFTT. Threonine 167, tyrosine 173, and aspartate 176 together coordinate ATP.

It belongs to the UMP kinase family. As to quaternary structure, homohexamer.

The protein resides in the cytoplasm. It carries out the reaction UMP + ATP = UDP + ADP. The protein operates within pyrimidine metabolism; CTP biosynthesis via de novo pathway; UDP from UMP (UMPK route): step 1/1. With respect to regulation, inhibited by UTP. Its function is as follows. Catalyzes the reversible phosphorylation of UMP to UDP. This Buchnera aphidicola subsp. Baizongia pistaciae (strain Bp) protein is Uridylate kinase.